Reading from the N-terminus, the 1703-residue chain is Arf-GAP with Rho-GAP domain, ANK repeat and PH domain-containing protein 2 (1703 aa).

Residues 6 to 70 form the SAM domain; the sequence is EVNADIRDFL…LKQLQMIFSK (65 aa). Position 77 is a phosphotyrosine (Y77). Disordered regions lie at residues 84–132, 191–232, and 286–319; these read KNGS…LSEG, EEHT…NGTN, and PVPE…LTLK. 3 stretches are compositionally biased toward polar residues: residues 85-103, 123-132, and 197-214; these read NGST…STHT, MVTTSTLSEG, and GNLT…NTEC. The segment covering 222 to 232 has biased composition (low complexity); that stretch reads TSGTHSGNGTN. The span at 308-319 shows a compositional bias: polar residues; it reads NTTSAGKSLTLK. PH domains lie at 480 to 572 and 585 to 677; these read AKEK…SALK and APEK…QSIA. An Arf-GAP domain is found at 674-809; sequence QSIAETLSDY…TLLASLTKEE (136 aa). The segment at 698–721 adopts a C4-type zinc-finger fold; it reads CADCKAPDPDWASINLCVVICKKC. PH domains are found at residues 899–1001 and 1012–1110; these read QTAA…KRFV and DYDL…KAAG. The Rho-GAP domain maps to 1114-1295; that stretch reads NALQDQQLCK…DLINNYVEIF (182 aa). One can recognise a Ras-associating domain in the interval 1324-1418; the sequence is GDLLIEVFVE…AYLVVKRFLT (95 aa). The PH 5 domain occupies 1428–1531; the sequence is KSIKEGILKL…WMASIFIAQH (104 aa). Position 1627 is a phosphoserine (S1627). 2 disordered regions span residues 1633-1670 and 1684-1703; these read DTEA…DPKL and RSRP…KEVK. Composition is skewed to basic and acidic residues over residues 1653 to 1670 and 1688 to 1703; these read KKTE…DPKL and LHKE…KEVK.

Its subcellular location is the cytoplasm. Phosphatidylinositol 3,4,5-trisphosphate-dependent GTPase-activating protein that modulates actin cytoskeleton remodeling by regulating ARF and RHO family members. Is activated by phosphatidylinositol 3,4,5-trisphosphate (PtdIns(3,4,5)P3) binding. Can be activated by phosphatidylinositol 3,4-bisphosphate (PtdIns(3,4,5)P2) binding, albeit with lower efficiency. In Mus musculus (Mouse), this protein is Arf-GAP with Rho-GAP domain, ANK repeat and PH domain-containing protein 2 (Arap2).